We begin with the raw amino-acid sequence, 142 residues long: MDGGSLRASPAAMDGGALEPAQQLSSLEGWTGQDRLLIPRWREARSLSWMQSPDLESSKCLTQGCCYPQAWILACSAALLQALASSDLQGSLDRVNYSRGLGPRVRLFVFPDTVGSTRKSGSTGNICSVMLNVATGCVRIEK.

This is an uncharacterized protein from Homo sapiens (Human).